A 311-amino-acid chain; its full sequence is Aspartate carbamoyltransferase catalytic subunit (311 aa).

The carbamoyl phosphate site is built by arginine 55 and threonine 56. Lysine 85 contributes to the L-aspartate binding site. Carbamoyl phosphate is bound by residues arginine 106, histidine 135, and glutamine 138. Positions 168 and 230 each coordinate L-aspartate. Leucine 268 and proline 269 together coordinate carbamoyl phosphate.

This sequence belongs to the aspartate/ornithine carbamoyltransferase superfamily. ATCase family. As to quaternary structure, heterododecamer (2C3:3R2) of six catalytic PyrB chains organized as two trimers (C3), and six regulatory PyrI chains organized as three dimers (R2).

It carries out the reaction carbamoyl phosphate + L-aspartate = N-carbamoyl-L-aspartate + phosphate + H(+). It participates in pyrimidine metabolism; UMP biosynthesis via de novo pathway; (S)-dihydroorotate from bicarbonate: step 2/3. Functionally, catalyzes the condensation of carbamoyl phosphate and aspartate to form carbamoyl aspartate and inorganic phosphate, the committed step in the de novo pyrimidine nucleotide biosynthesis pathway. The chain is Aspartate carbamoyltransferase catalytic subunit from Yersinia enterocolitica serotype O:8 / biotype 1B (strain NCTC 13174 / 8081).